Here is a 251-residue protein sequence, read N- to C-terminus: Coproheme decarboxylase (251 aa).

Residues Arg133, 147–151 (YPMSK), His174, Gln187, and Ser225 each bind Fe-coproporphyrin III. Tyr147 is an active-site residue.

This sequence belongs to the ChdC family. Type 1 subfamily. Fe-coproporphyrin III is required as a cofactor.

The catalysed reaction is Fe-coproporphyrin III + 2 H2O2 + 2 H(+) = heme b + 2 CO2 + 4 H2O. It catalyses the reaction Fe-coproporphyrin III + H2O2 + H(+) = harderoheme III + CO2 + 2 H2O. The enzyme catalyses harderoheme III + H2O2 + H(+) = heme b + CO2 + 2 H2O. It participates in porphyrin-containing compound metabolism; protoheme biosynthesis. Involved in coproporphyrin-dependent heme b biosynthesis. Catalyzes the decarboxylation of Fe-coproporphyrin III (coproheme) to heme b (protoheme IX), the last step of the pathway. The reaction occurs in a stepwise manner with a three-propionate intermediate. The polypeptide is Coproheme decarboxylase (Listeria innocua serovar 6a (strain ATCC BAA-680 / CLIP 11262)).